Reading from the N-terminus, the 331-residue chain is Ferredoxin--NADP reductase 2 (331 aa).

FAD-binding residues include E37, Q45, Y50, V90, F124, D286, and T327.

It belongs to the ferredoxin--NADP reductase type 2 family. Homodimer. It depends on FAD as a cofactor.

The enzyme catalyses 2 reduced [2Fe-2S]-[ferredoxin] + NADP(+) + H(+) = 2 oxidized [2Fe-2S]-[ferredoxin] + NADPH. This is Ferredoxin--NADP reductase 2 from Listeria monocytogenes serotype 4b (strain F2365).